A 643-amino-acid polypeptide reads, in one-letter code: Nicastrin (643 aa).

The signal sequence occupies residues 1 to 20 (MRFKNVLVLLLLLVFSVINS). At 21–611 (EPSAPATISD…VFKIGNSTTE (591 aa)) the chain is on the extracellular side. Cysteine 42 and cysteine 54 are joined by a disulfide. Residues asparagine 96 and asparagine 166 are each glycosylated (N-linked (GlcNAc...) asparagine). 2 disulfides stabilise this stretch: cysteine 204/cysteine 210 and cysteine 308/cysteine 318. N-linked (GlcNAc...) asparagine glycans are attached at residues asparagine 333 and asparagine 385. 3 disulfide bridges follow: cysteine 479/cysteine 486, cysteine 540/cysteine 551, and cysteine 546/cysteine 556. Asparagine 584 carries N-linked (GlcNAc...) asparagine glycosylation. A helical membrane pass occupies residues 612 to 632 (IWFLVSGLIELLVSIGLILYV). Topologically, residues 633–643 (KKFLSNRYKLL) are cytoplasmic.

It belongs to the nicastrin family. In terms of assembly, component of the gamma-secretase complex, a complex composed of a presenilin homodimer, nicastrin, aph1 and pen2.

The protein resides in the membrane. Functionally, essential subunit of the gamma-secretase complex, an endoprotease complex that catalyzes the intramembrane cleavage of integral membrane proteins such as Notch receptors and APP (amyloid-beta precursor protein). This is Nicastrin from Dictyostelium purpureum (Slime mold).